The following is a 352-amino-acid chain: MVFRIASSPYTHNQRQTSRIMLLVLLAAVPGIAAQLWFFGWGTLVQILLASVSALLAEALVLKLRKQSVAATLKDNSALLTGLLLAVSIPPLAPWWMVVLGTVFAVIIAKQLYGGLGQNPFNPAMIGYVVLLISFPVQMTSWLPPHEIAVNIPGFIDAIQVIFSGHTASGGDMNTLRLGIDGISQATPLDTFKTSVRAGHSVEEIMQYPIYSGILAGAGWQWVNLAWLAGGVWLLWQKAIRWHIPLSFLVTLALCATLGWLFSPDTLAAPQIHLLSGATMLGAFFILTDPVTASTTNRGRLIFGALAGLLVWMIRSFGGYPDGVAFAVLLANITVPLIDYYTRPRVYGHRKG.

The next 5 helical transmembrane spans lie at 20–40 (IMLL…WFFG), 42–62 (GTLV…ALVL), 78–109 (ALLT…VIIA), 123–143 (PAMI…TSWL), and 148–168 (IAVN…GHTA). T187 is modified (FMN phosphoryl threonine). 5 consecutive transmembrane segments (helical) span residues 214–234 (ILAG…GVWL), 242–262 (WHIP…GWLF), 267–287 (LAAP…FFIL), 301–321 (LIFG…GGYP), and 322–342 (DGVA…DYYT).

The protein belongs to the NqrB/RnfD family. In terms of assembly, the complex is composed of six subunits: RsxA, RsxB, RsxC, RsxD, RsxE and RsxG. Requires FMN as cofactor.

Its subcellular location is the cell inner membrane. In terms of biological role, part of a membrane-bound complex that couples electron transfer with translocation of ions across the membrane. Required to maintain the reduced state of SoxR. In Escherichia coli O6:K15:H31 (strain 536 / UPEC), this protein is Ion-translocating oxidoreductase complex subunit D.